The chain runs to 345 residues: Anthranilate phosphoribosyltransferase (345 aa).

5-phospho-alpha-D-ribose 1-diphosphate contacts are provided by residues G80, 83–84, T88, 90–93, 108–116, and S120; these read GD, NIST, and KHGNRSVSS. Anthranilate is bound at residue G80. A Mg(2+)-binding site is contributed by S92. Residue N111 participates in anthranilate binding. Anthranilate is bound at residue R166. Mg(2+)-binding residues include D225 and E226.

This sequence belongs to the anthranilate phosphoribosyltransferase family. In terms of assembly, homodimer. Mg(2+) is required as a cofactor.

The catalysed reaction is N-(5-phospho-beta-D-ribosyl)anthranilate + diphosphate = 5-phospho-alpha-D-ribose 1-diphosphate + anthranilate. It functions in the pathway amino-acid biosynthesis; L-tryptophan biosynthesis; L-tryptophan from chorismate: step 2/5. In terms of biological role, catalyzes the transfer of the phosphoribosyl group of 5-phosphorylribose-1-pyrophosphate (PRPP) to anthranilate to yield N-(5'-phosphoribosyl)-anthranilate (PRA). This is Anthranilate phosphoribosyltransferase from Desulforamulus reducens (strain ATCC BAA-1160 / DSM 100696 / MI-1) (Desulfotomaculum reducens).